Here is a 226-residue protein sequence, read N- to C-terminus: Aspartyl protease inhibitor (226 aa).

Positions methionine 1 to alanine 15 are cleaved as a signal peptide. 2 disordered regions span residues glycine 95 to serine 116 and glutamate 196 to valine 218. Cysteines 131 and 222 form a disulfide.

The protein belongs to the protease inhibitor I33 family.

Its subcellular location is the secreted. In terms of biological role, aspartyl protease inhibitor. In Parelaphostrongylus tenuis (Meningeal worm), this protein is Aspartyl protease inhibitor.